The sequence spans 617 residues: Probable Xaa-Pro aminopeptidase P (617 aa).

Mn(2+)-binding residues include D414, D425, E523, and E537.

It belongs to the peptidase M24B family. Requires Mn(2+) as cofactor.

It catalyses the reaction Release of any N-terminal amino acid, including proline, that is linked to proline, even from a dipeptide or tripeptide.. Its function is as follows. Catalyzes the removal of a penultimate prolyl residue from the N-termini of peptides. This chain is Probable Xaa-Pro aminopeptidase P (AMPP), found in Ajellomyces dermatitidis (strain ER-3 / ATCC MYA-2586) (Blastomyces dermatitidis).